Here is an 85-residue protein sequence, read N- to C-terminus: Beta-insect depressant toxin Lqh-dprIT3f (85 aa).

An N-terminal signal peptide occupies residues 1 to 21 (MKLLLLLTISASMLIEGLVNA). Positions 22-82 (DGYIRGGDGC…EWDYETDTCG (61 aa)) constitute an LCN-type CS-alpha/beta domain. 4 disulfide bridges follow: Cys31/Cys81, Cys35/Cys56, Cys42/Cys63, and Cys46/Cys65. Gly82 carries the post-translational modification Glycine amide.

The protein belongs to the long (4 C-C) scorpion toxin superfamily. Sodium channel inhibitor family. Beta subfamily. In terms of tissue distribution, expressed by the venom gland.

The protein resides in the secreted. Functionally, depressant insect beta-toxins cause a transient contraction paralysis followed by a slow flaccid paralysis. They bind voltage-independently at site-4 of sodium channels (Nav) and block action potentials, primarily by depolarizing the axonal membrane and suppressing the sodium current. This depressant toxin is active only on insects. It is found in a relatively small amount in the venom. This Leiurus hebraeus (Hebrew deathstalker scorpion) protein is Beta-insect depressant toxin Lqh-dprIT3f.